A 519-amino-acid chain; its full sequence is 2-isopropylmalate synthase (519 aa).

The Pyruvate carboxyltransferase domain maps to 5–267 (VVIFDTTLRD…STNINYKEIY (263 aa)). Mn(2+) contacts are provided by Asp14, His202, His204, and Asn238. The segment at 392 to 519 (SLKFFSVQSI…LKILKDFKKK (128 aa)) is regulatory domain.

It belongs to the alpha-IPM synthase/homocitrate synthase family. LeuA type 1 subfamily. Homodimer. The cofactor is Mn(2+).

The protein resides in the cytoplasm. It catalyses the reaction 3-methyl-2-oxobutanoate + acetyl-CoA + H2O = (2S)-2-isopropylmalate + CoA + H(+). It functions in the pathway amino-acid biosynthesis; L-leucine biosynthesis; L-leucine from 3-methyl-2-oxobutanoate: step 1/4. Catalyzes the condensation of the acetyl group of acetyl-CoA with 3-methyl-2-oxobutanoate (2-ketoisovalerate) to form 3-carboxy-3-hydroxy-4-methylpentanoate (2-isopropylmalate). The sequence is that of 2-isopropylmalate synthase from Buchnera aphidicola subsp. Acyrthosiphon pisum (strain APS) (Acyrthosiphon pisum symbiotic bacterium).